A 443-amino-acid chain; its full sequence is MQNELAQTIPELISWTKEREFSLSLPSDRLAFLLVISIYNNEQTDGELLESDLIDLFRYVSNVFEQSEASLLQRANNAINDLVKQRFLNRFSSEFTEGLAIYRVTPLGVGVSDYYVRQREFSSLRLSIQLSIVADEIQRASVAAEQGGDERYWRNNVFAPLKFSVAEIFDSIDLSQRMMDENQHQIREQIAGLLSQNWHEAIINCQQLLDETSINLRELQDTLNAAGDKLQSQLLRIQSCLISRDDLAFVDQLIVNLQNKLDRIMSWGQQAIDLWIGYDKHVHKFIRTAIDMDKNRVFGQRLRQSIQNYFSSPWLLYTAKAEALLDLRDDEAMLNEMEAVGELPMALEYESLTDVQTQIVTAIQAELAHFRDTAQPINLGAVLREQLARYPQSRHFDVARIIVDQAVKLGMASQDHQAVYPVWQPIDDFSAAVQAHLIDQYDK.

Residues 209–237 (LDETSINLRELQDTLNAAGDKLQSQLLRI) are leucine-zipper.

This sequence belongs to the MukF family. As to quaternary structure, interacts, and probably forms a ternary complex, with MukE and MukB via its C-terminal region. The complex formation is stimulated by calcium or magnesium. It is required for an interaction between MukE and MukB.

Its subcellular location is the cytoplasm. The protein localises to the nucleoid. Functionally, involved in chromosome condensation, segregation and cell cycle progression. May participate in facilitating chromosome segregation by condensation DNA from both sides of a centrally located replisome during cell division. Not required for mini-F plasmid partitioning. Probably acts via its interaction with MukB and MukE. Overexpression results in anucleate cells. It has a calcium binding activity. This Haemophilus ducreyi (strain 35000HP / ATCC 700724) protein is Chromosome partition protein MukF.